Here is a 437-residue protein sequence, read N- to C-terminus: tRNA modification GTPase MnmE (437 aa).

3 residues coordinate (6S)-5-formyl-5,6,7,8-tetrahydrofolate: R21, E80, and R120. The TrmE-type G domain maps to 218–361 (GFVVVLAGPP…LLDRVAAAAG (144 aa)). N228 is a K(+) binding site. Residues 228-233 (NAGKST), 247-253 (SPIPGTT), and 272-275 (DTAG) each bind GTP. Position 232 (S232) interacts with Mg(2+). Positions 247, 249, and 252 each coordinate K(+). Residue T253 participates in Mg(2+) binding. K437 provides a ligand contact to (6S)-5-formyl-5,6,7,8-tetrahydrofolate.

It belongs to the TRAFAC class TrmE-Era-EngA-EngB-Septin-like GTPase superfamily. TrmE GTPase family. In terms of assembly, homodimer. Heterotetramer of two MnmE and two MnmG subunits. The cofactor is K(+).

Its subcellular location is the cytoplasm. In terms of biological role, exhibits a very high intrinsic GTPase hydrolysis rate. Involved in the addition of a carboxymethylaminomethyl (cmnm) group at the wobble position (U34) of certain tRNAs, forming tRNA-cmnm(5)s(2)U34. In Methylobacterium sp. (strain 4-46), this protein is tRNA modification GTPase MnmE.